Reading from the N-terminus, the 429-residue chain is Proton/sodium-glutamate symport protein (429 aa).

The Cytoplasmic segment spans residues 1 to 5; that stretch reads MKRIK. A helical transmembrane segment spans residues 6-26; sequence FGLATQIFVGLILGVIVGVIW. Residues 27–45 are Extracellular-facing; sequence YGNPALPTYLQPIGDLFLR. The chain crosses the membrane as a helical span at residues 46–66; it reads LIKMIVIPIVVSSLIIGVAGA. Residues 67–79 are Cytoplasmic-facing; that stretch reads GNGKQVGKLGFRT. A helical membrane pass occupies residues 80–100; it reads ILYFEIITTFAIILGLALANI. The Extracellular segment spans residues 101–150; it reads FHPGTGVNIHEAQKSDISQYVETEKEQSNKSVAETFLHIVPTNFFQSLVE. Residues 151 to 171 form a helical membrane-spanning segment; it reads GDLLAIICFTVLFALGISAIG. Residues 172 to 190 lie on the Cytoplasmic side of the membrane; the sequence is ERGKPVLAFFEGVSHAMFH. The helical transmembrane segment at 191 to 211 threads the bilayer; the sequence is VVNLVMKVAPFGVFALIGVTV. Topologically, residues 212–224 are extracellular; it reads SKFGLGSLISLGK. The helical transmembrane segment at 225–245 threads the bilayer; it reads LVGLVYVALAFFLIVIFGIVA. Lys246 is a topological domain (cytoplasmic). Residues 247 to 267 form a helical membrane-spanning segment; sequence IAGISIFKFLAYMKDEILLAF. The Extracellular portion of the chain corresponds to 268–290; that stretch reads STSSSETVLPRIMEKMEKIGCPK. Residues 291 to 311 form a helical membrane-spanning segment; it reads GIVSFVIPIGYTFNLDGSVLY. The Cytoplasmic portion of the chain corresponds to 312-321; sequence QSIAALFLAQ. A helical membrane pass occupies residues 322 to 342; it reads VYGIDLTIWHQITLVLVLMVT. The Extracellular segment spans residues 343–353; sequence SKGMAAVPGTS. The helical transmembrane segment at 354 to 374 threads the bilayer; that stretch reads FVVLLATLGTIGVPAEGLAFI. The Cytoplasmic segment spans residues 375–429; the sequence is AGVDRIMDMARTVVNLTGNALAAVVMSKWEGMFNPAKAETVMSQSKTEQNATISG.

Belongs to the dicarboxylate/amino acid:cation symporter (DAACS) (TC 2.A.23) family. In terms of assembly, homotrimer. Interacts with FloT.

The protein resides in the cell membrane. It localises to the membrane raft. Its function is as follows. This carrier protein is part of the Na(+)-dependent, binding-protein-independent glutamate-aspartate transport system. In Bacillus subtilis (strain 168), this protein is Proton/sodium-glutamate symport protein (gltT).